The sequence spans 383 residues: Acetylornithine deacetylase (383 aa).

Residue His-80 coordinates Zn(2+). Asp-82 is an active-site residue. A Zn(2+)-binding site is contributed by Asp-112. Glu-144 is a catalytic residue. Glu-145, Glu-169, and His-355 together coordinate Zn(2+).

The protein belongs to the peptidase M20A family. ArgE subfamily. As to quaternary structure, homodimer. It depends on Zn(2+) as a cofactor. The cofactor is Co(2+). Glutathione serves as cofactor.

The protein localises to the cytoplasm. The enzyme catalyses N(2)-acetyl-L-ornithine + H2O = L-ornithine + acetate. It functions in the pathway amino-acid biosynthesis; L-arginine biosynthesis; L-ornithine from N(2)-acetyl-L-ornithine (linear): step 1/1. Its function is as follows. Catalyzes the hydrolysis of the amide bond of N(2)-acetylated L-amino acids. Cleaves the acetyl group from N-acetyl-L-ornithine to form L-ornithine, an intermediate in L-arginine biosynthesis pathway, and a branchpoint in the synthesis of polyamines. The sequence is that of Acetylornithine deacetylase from Shigella dysenteriae serotype 1 (strain Sd197).